The chain runs to 86 residues: Small ribosomal subunit protein bS20 (86 aa).

Positions 1–27 (MANIKSAKKRAVQSEKRRQHNASRRSM) are enriched in basic residues. The tract at residues 1-28 (MANIKSAKKRAVQSEKRRQHNASRRSMM) is disordered.

Belongs to the bacterial ribosomal protein bS20 family.

Its function is as follows. Binds directly to 16S ribosomal RNA. The chain is Small ribosomal subunit protein bS20 from Proteus mirabilis (strain HI4320).